A 620-amino-acid polypeptide reads, in one-letter code: 1-deoxy-D-xylulose-5-phosphate synthase (620 aa).

Thiamine diphosphate contacts are provided by residues His80 and 121 to 123 (GHS). Mg(2+) is bound at residue Asp152. Thiamine diphosphate is bound by residues 153–154 (GA), Asn181, Tyr288, and Glu370. Asn181 lines the Mg(2+) pocket.

It belongs to the transketolase family. DXPS subfamily. Homodimer. Mg(2+) is required as a cofactor. It depends on thiamine diphosphate as a cofactor.

It catalyses the reaction D-glyceraldehyde 3-phosphate + pyruvate + H(+) = 1-deoxy-D-xylulose 5-phosphate + CO2. The protein operates within metabolic intermediate biosynthesis; 1-deoxy-D-xylulose 5-phosphate biosynthesis; 1-deoxy-D-xylulose 5-phosphate from D-glyceraldehyde 3-phosphate and pyruvate: step 1/1. In terms of biological role, catalyzes the acyloin condensation reaction between C atoms 2 and 3 of pyruvate and glyceraldehyde 3-phosphate to yield 1-deoxy-D-xylulose-5-phosphate (DXP). The protein is 1-deoxy-D-xylulose-5-phosphate synthase of Escherichia coli O157:H7.